A 191-amino-acid polypeptide reads, in one-letter code: Protein GrpE (191 aa).

A compositionally biased stretch (basic and acidic residues) spans 1–15 (MGKEEKNNIEDKALD). The interval 1 to 35 (MGKEEKNNIEDKALDNEQEMDQESTSKAVEELSIE) is disordered.

It belongs to the GrpE family. As to quaternary structure, homodimer.

The protein resides in the cytoplasm. Participates actively in the response to hyperosmotic and heat shock by preventing the aggregation of stress-denatured proteins, in association with DnaK and GrpE. It is the nucleotide exchange factor for DnaK and may function as a thermosensor. Unfolded proteins bind initially to DnaJ; upon interaction with the DnaJ-bound protein, DnaK hydrolyzes its bound ATP, resulting in the formation of a stable complex. GrpE releases ADP from DnaK; ATP binding to DnaK triggers the release of the substrate protein, thus completing the reaction cycle. Several rounds of ATP-dependent interactions between DnaJ, DnaK and GrpE are required for fully efficient folding. This is Protein GrpE from Francisella philomiragia subsp. philomiragia (strain ATCC 25017 / CCUG 19701 / FSC 153 / O#319-036).